The sequence spans 341 residues: ATP synthase subunit a 2 (341 aa).

The signal sequence occupies residues 1–33 (MKRVKVIQIKGFFRVMALLAPLLLNAYLPVQAS). 6 helical membrane passes run 112–132 (VVML…VGAA), 173–193 (LPYL…GLIP), 195–215 (GATA…TFFI), 242–262 (WIIM…ALTV), 273–293 (IVIL…VAAA), and 307–327 (IFVA…FIGL).

The protein belongs to the ATPase A chain family. In terms of assembly, F-type ATPases have 2 components, CF(1) - the catalytic core - and CF(0) - the membrane proton channel. CF(1) has five subunits: alpha(3), beta(3), gamma(1), delta(1), epsilon(1). CF(0) has four main subunits: a, b, b' and c.

It is found in the cell inner membrane. Its function is as follows. Key component of the proton channel; it plays a direct role in the translocation of protons across the membrane. The polypeptide is ATP synthase subunit a 2 (Chlorobium luteolum (strain DSM 273 / BCRC 81028 / 2530) (Pelodictyon luteolum)).